The sequence spans 66 residues: Cold shock protein CspD (66 aa).

A CSD domain is found at 4–63 (GKVKWFNNEKGFGFIEVEGGDDVFVHFTAIEGDGYKSLEEGQEVSFEIVEGNRGPQASNV).

The protein resides in the cytoplasm. The protein is Cold shock protein CspD (cspD) of Bacillus subtilis (strain 168).